We begin with the raw amino-acid sequence, 206 residues long: Large ribosomal subunit protein uL4 (206 aa).

The interval 65 to 85 is disordered; it reads KQKGSGGARHGDRKAPQFRGG.

It belongs to the universal ribosomal protein uL4 family. In terms of assembly, part of the 50S ribosomal subunit.

Its function is as follows. One of the primary rRNA binding proteins, this protein initially binds near the 5'-end of the 23S rRNA. It is important during the early stages of 50S assembly. It makes multiple contacts with different domains of the 23S rRNA in the assembled 50S subunit and ribosome. Forms part of the polypeptide exit tunnel. This chain is Large ribosomal subunit protein uL4, found in Parvibaculum lavamentivorans (strain DS-1 / DSM 13023 / NCIMB 13966).